We begin with the raw amino-acid sequence, 194 residues long: Probable thymidylate kinase (194 aa).

Gly-8–Thr-15 provides a ligand contact to ATP.

This sequence belongs to the thymidylate kinase family.

The enzyme catalyses dTMP + ATP = dTDP + ADP. This chain is Probable thymidylate kinase, found in Sulfolobus acidocaldarius (strain ATCC 33909 / DSM 639 / JCM 8929 / NBRC 15157 / NCIMB 11770).